The sequence spans 98 residues: Large ribosomal subunit protein uL23 (98 aa).

This sequence belongs to the universal ribosomal protein uL23 family. As to quaternary structure, part of the 50S ribosomal subunit. Contacts protein L29, and trigger factor when it is bound to the ribosome.

Functionally, one of the early assembly proteins it binds 23S rRNA. One of the proteins that surrounds the polypeptide exit tunnel on the outside of the ribosome. Forms the main docking site for trigger factor binding to the ribosome. In Methylobacterium nodulans (strain LMG 21967 / CNCM I-2342 / ORS 2060), this protein is Large ribosomal subunit protein uL23.